Consider the following 133-residue polypeptide: MSMKEFVQKLDEIQASFSSHFPLVIINSNYKIDNGIVIFGKKGWLRINESVPIMINYGSLILLDTPKNYMVGVYKNVNGGRKIKSYSPSRSQKALNNPSKIRTKQTNNDTTIQQSNNTTSTNTKPSSNTNTQQ.

A disordered region spans residues 82–133 (KIKSYSPSRSQKALNNPSKIRTKQTNNDTTIQQSNNTTSTNTKPSSNTNTQQ). The segment covering 86–100 (YSPSRSQKALNNPSK) has biased composition (polar residues). Low complexity predominate over residues 105–133 (QTNNDTTIQQSNNTTSTNTKPSSNTNTQQ).

This is an uncharacterized protein from Acidianus convivator (ABV).